The following is a 262-amino-acid chain: Iso-A82775C biosynthesis cluster protein B (262 aa).

Part of the gene cluster that mediates the biosynthesis of iso-A82775C, a enylepoxycyclohexane and biosynthetic precursor of the chloropestolide anticancer natural products. Within the cluster, the prenyltransferase iacE prenylates siccayne to generate pestalodiol E, using dimethylallyl diphosphate (DMAPP) as cosubstrate. The probable oxidoreductase iacF is then involved in the epoxidation of pestalodiol F to pestalodiol F, which is further converted to pestalofone A by the short-chain dehydrogenase/reductase iacG. Iso-A82775C is subsequently generated from pestalofone A by the short-chain dehydrogenase/reductase iacC. Iso-A82775C is further condensed with maldoxin via a Diels-Alder reaction to produce the anticancer natural products chloropestolides A to E. This chain is Iso-A82775C biosynthesis cluster protein B, found in Pestalotiopsis fici (strain W106-1 / CGMCC3.15140).